The chain runs to 66 residues: Large ribosomal subunit protein uL29 (66 aa).

The protein belongs to the universal ribosomal protein uL29 family.

The chain is Large ribosomal subunit protein uL29 from Helicobacter pylori (strain Shi470).